The sequence spans 116 residues: Large ribosomal subunit protein uL18 (116 aa).

The protein belongs to the universal ribosomal protein uL18 family. In terms of assembly, part of the 50S ribosomal subunit; part of the 5S rRNA/L5/L18/L25 subcomplex. Contacts the 5S and 23S rRNAs.

In terms of biological role, this is one of the proteins that bind and probably mediate the attachment of the 5S RNA into the large ribosomal subunit, where it forms part of the central protuberance. This is Large ribosomal subunit protein uL18 from Marinomonas sp. (strain MWYL1).